Consider the following 513-residue polypeptide: Palmitoyltransferase ZDHHC14 (513 aa).

Over M1–Q59 the chain is Cytoplasmic. The helical transmembrane segment at T60 to F80 threads the bilayer. The Lumenal segment spans residues D81–N88. A helical membrane pass occupies residues L89–L109. The Cytoplasmic segment spans residues R110–R207. The DHHC domain occupies K164–L214. The S-palmitoyl cysteine intermediate role is filled by C194. The chain crosses the membrane as a helical span at residues F208–I228. Residues T229–T266 lie on the Lumenal side of the membrane. Residues A267–L287 form a helical membrane-spanning segment. Topologically, residues S288–V513 are cytoplasmic. The interval F348–N369 is disordered. Residues Q355–N369 show a composition bias toward polar residues.

It belongs to the DHHC palmitoyltransferase family. ERF2/ZDHHC9 subfamily.

It localises to the endoplasmic reticulum membrane. Its subcellular location is the golgi apparatus membrane. The enzyme catalyses L-cysteinyl-[protein] + hexadecanoyl-CoA = S-hexadecanoyl-L-cysteinyl-[protein] + CoA. In terms of biological role, palmitoyltransferase that could catalyze the addition of palmitate onto various protein substrates. The polypeptide is Palmitoyltransferase ZDHHC14 (zdhhc14) (Danio rerio (Zebrafish)).